A 164-amino-acid chain; its full sequence is ATP synthase subunit b (164 aa).

Residues 12–32 (FILVTGSVIVLLLLIKAFAWG) form a helical membrane-spanning segment.

The protein belongs to the ATPase B chain family. As to quaternary structure, F-type ATPases have 2 components, F(1) - the catalytic core - and F(0) - the membrane proton channel. F(1) has five subunits: alpha(3), beta(3), gamma(1), delta(1), epsilon(1). F(0) has three main subunits: a(1), b(2) and c(10-14). The alpha and beta chains form an alternating ring which encloses part of the gamma chain. F(1) is attached to F(0) by a central stalk formed by the gamma and epsilon chains, while a peripheral stalk is formed by the delta and b chains.

It is found in the cell membrane. F(1)F(0) ATP synthase produces ATP from ADP in the presence of a proton or sodium gradient. F-type ATPases consist of two structural domains, F(1) containing the extramembraneous catalytic core and F(0) containing the membrane proton channel, linked together by a central stalk and a peripheral stalk. During catalysis, ATP synthesis in the catalytic domain of F(1) is coupled via a rotary mechanism of the central stalk subunits to proton translocation. Its function is as follows. Component of the F(0) channel, it forms part of the peripheral stalk, linking F(1) to F(0). This is ATP synthase subunit b from Streptococcus equi subsp. zooepidemicus (strain MGCS10565).